A 531-amino-acid polypeptide reads, in one-letter code: Tyrosine 2,3-aminomutase (531 aa).

Tyr51 acts as the Proton donor/acceptor in catalysis. His81 is a substrate binding site. The 5-imidazolinone (Ala-Gly) cross-link spans 140 to 142 (ASG). Ser141 is subject to 2,3-didehydroalanine (Ser). Residues Asn193 and Arg298 each coordinate substrate.

Belongs to the TAL/TAM family. As to quaternary structure, homotetramer; dimer of dimers. Contains an active site 4-methylidene-imidazol-5-one (MIO), which is formed autocatalytically by cyclization and dehydration of residues Ala-Ser-Gly.

It carries out the reaction L-tyrosine = 3-amino-3-(4-hydroxyphenyl)propanoate. The catalysed reaction is L-tyrosine = (E)-4-coumarate + NH4(+). Its function is as follows. Has aminomutase and, to a lesser extent, ammonia-lyase activity. Primarily, catalyzes the rearrangement of L-tyrosine to R-beta-tyrosine, which is incorporated into secondary metabolites called chondramides. The aminomutase activity mainly produces R-beta-tyrosine but also S-beta tyrosine in smaller amounts. Does not accept D-tyrosine, L-histidine or L-phenylalanine as substrates. In Chondromyces crocatus, this protein is Tyrosine 2,3-aminomutase.